A 2633-amino-acid polypeptide reads, in one-letter code: Non-reducing polyketide synthase sor2 (2633 aa).

Residues 67–237 are N-terminal acylcarrier protein transacylase domain (SAT); the sequence is VSNAQKLAEW…TTSTRTVAAL (171 aa). Catalysis depends on cysteine 140, which acts as the Nucleophile; for transacylase activity. The Proton donor/acceptor; for transacylase activity role is filled by histidine 258. The Ketosynthase family 3 (KS3) domain occupies 389-814; sequence ENDIAVIGMA…GSNASVIIKQ (426 aa). Residues cysteine 561, histidine 696, and histidine 737 each act as for beta-ketoacyl synthase activity in the active site. The malonyl-CoA:ACP transacylase (MAT) domain stretch occupies residues 928–1239; it reads CFGGQVSTFV…SKASSQLSDV (312 aa). Residues 1307–1437 are N-terminal hotdog fold; the sequence is PQPVGLYTLL…GQLHFQASDD (131 aa). One can recognise a PKS/mFAS DH domain in the interval 1307–1627; sequence PQPVGLYTLL…YAPVSLDQLF (321 aa). The interval 1338–1509 is product template (PT) domain; that stretch reads MSDHAIGKAQ…SNESAGRLVR (172 aa). The C-terminal hotdog fold stretch occupies residues 1464-1627; sequence GRSDEVIQGQ…YAPVSLDQLF (164 aa). A Carrier domain is found at 1684–1758; sequence EELWLRLRPV…GILKFLQSTL (75 aa). At serine 1718 the chain carries O-(pantetheine 4'-phosphoryl)serine. A disordered region spans residues 1762 to 1792; that stretch reads DVHDSSETMSTVSSDGNVHSPPTSGSEMASP. Polar residues predominate over residues 1768-1790; that stretch reads ETMSTVSSDGNVHSPPTSGSEMA. A methyltransferase domain region spans residues 1982–2166; the sequence is FELMADFLTR…ASGFKHVRWT (185 aa). The NADPH-binding (R) domain stretch occupies residues 2253–2495; it reads VTGATGSLGS…TLRALPDVDG (243 aa).

The cofactor is pantetheine 4'-phosphate.

The protein operates within secondary metabolite biosynthesis. In terms of biological role, non-reducing polyketide synthase; part of the SOR gene cluster that mediates the biosynthesis of sorbicillinoids, a diverse group of yellow secondary metabolites that restrict growth of competing pathogenic fungi but not of bacteria. Sorbicillinoids biosynthesis requires the action of two PKSs. The SOR cluster is required for the production of trichodimerol and dihydrotrichotetronin, with sor2 being sufficient for production of trichodimerol, but not dihydrotrichotetronin in the light. Sor1 iteratively combines three acetyl units and the growing chain is modified by the ketoacyl reductase subunit, and optional by the enoyl reductase subunit in the second cycle. The polyketide is then handed over to the PKS sor2, which adds three more acetyl units, and two methyl groups. Sor2 releases an aldehyde, which undergoes spontaneous cyclization resulting in the formation of sorbicillin or 2',3'-dihydrosorbicillin. The monooxygenase sor5 oxidizes sorbicillin and 2',3'-dihydrosorbicillin to 2',3'-dihydrosorbicillinol and sorbicillinol, respectively. The oxidoreductase sor8 further converts sorbicillinol into oxosorbicillinol. Sorbicillinol is the building block for the other sorbicillinoids such as disorbicillinol, bisvertinolon, dihydrobisvertinolone, and dihydrotrichotetronine. This is Non-reducing polyketide synthase sor2 from Hypocrea jecorina (strain QM6a) (Trichoderma reesei).